The primary structure comprises 215 residues: LexA repressor (215 aa).

Residues Arg-28 to Arg-48 constitute a DNA-binding region (H-T-H motif). Active-site for autocatalytic cleavage activity residues include Ser-133 and Lys-170.

This sequence belongs to the peptidase S24 family. As to quaternary structure, homodimer.

It catalyses the reaction Hydrolysis of Ala-|-Gly bond in repressor LexA.. In terms of biological role, represses a number of genes involved in the response to DNA damage (SOS response), including recA and lexA. In the presence of single-stranded DNA, RecA interacts with LexA causing an autocatalytic cleavage which disrupts the DNA-binding part of LexA, leading to derepression of the SOS regulon and eventually DNA repair. In Burkholderia vietnamiensis (strain G4 / LMG 22486) (Burkholderia cepacia (strain R1808)), this protein is LexA repressor.